We begin with the raw amino-acid sequence, 110 residues long: Phosphoribosyl-ATP pyrophosphatase (110 aa).

The protein belongs to the PRA-PH family.

It is found in the cytoplasm. The catalysed reaction is 1-(5-phospho-beta-D-ribosyl)-ATP + H2O = 1-(5-phospho-beta-D-ribosyl)-5'-AMP + diphosphate + H(+). It participates in amino-acid biosynthesis; L-histidine biosynthesis; L-histidine from 5-phospho-alpha-D-ribose 1-diphosphate: step 2/9. This Teredinibacter turnerae (strain ATCC 39867 / T7901) protein is Phosphoribosyl-ATP pyrophosphatase.